Here is a 1022-residue protein sequence, read N- to C-terminus: Probable beta-galactosidase B (1022 aa).

A signal peptide spans 1-20; that stretch reads MARFPQLLFLLLASIGLLSA. A glycan (N-linked (GlcNAc...) asparagine) is linked at asparagine 23. A substrate-binding site is contributed by tyrosine 90. N-linked (GlcNAc...) asparagine glycosylation is present at asparagine 100. Asparagine 135, alanine 136, glutamate 137, and asparagine 195 together coordinate substrate. The active-site Proton donor is glutamate 196. N-linked (GlcNAc...) asparagine glycosylation occurs at asparagine 211. Tyrosine 265 contributes to the substrate binding site. An intrachain disulfide couples cysteine 271 to cysteine 324. Catalysis depends on glutamate 308, which acts as the Nucleophile. Tyrosine 373 is a binding site for substrate. N-linked (GlcNAc...) asparagine glycosylation is found at asparagine 411, asparagine 456, asparagine 541, asparagine 554, asparagine 626, asparagine 777, asparagine 790, asparagine 832, asparagine 880, and asparagine 881.

This sequence belongs to the glycosyl hydrolase 35 family.

Its subcellular location is the secreted. It carries out the reaction Hydrolysis of terminal non-reducing beta-D-galactose residues in beta-D-galactosides.. Its function is as follows. Cleaves beta-linked terminal galactosyl residues from gangliosides, glycoproteins, and glycosaminoglycans. The sequence is that of Probable beta-galactosidase B (lacB) from Aspergillus terreus (strain NIH 2624 / FGSC A1156).